The chain runs to 615 residues: DNA mismatch repair protein MutL (615 aa).

Residues 362–397 (HFAEPAVREPVAPRYSPAPASGSRPAASWPNAQPGY) form a disordered region. Positions 373-391 (APRYSPAPASGSRPAASWP) are enriched in low complexity.

It belongs to the DNA mismatch repair MutL/HexB family.

Functionally, this protein is involved in the repair of mismatches in DNA. It is required for dam-dependent methyl-directed DNA mismatch repair. May act as a 'molecular matchmaker', a protein that promotes the formation of a stable complex between two or more DNA-binding proteins in an ATP-dependent manner without itself being part of a final effector complex. This Escherichia coli O6:H1 (strain CFT073 / ATCC 700928 / UPEC) protein is DNA mismatch repair protein MutL.